The sequence spans 3916 residues: Fusarin C synthetase (3916 aa).

The region spanning 9 to 440 is the Ketosynthase family 3 (KS3) domain; sequence KEPIAIIGTS…GTNVHAIIEQ (432 aa). Active-site for beta-ketoacyl synthase activity residues include cysteine 182, histidine 319, and histidine 360. The segment at 548-869 is malonyl-CoA:ACP transacylase (MAT) domain; sequence VFTGQGAQWP…VTRNIHDVEA (322 aa). The tract at residues 935–1068 is N-terminal hotdog fold; it reads HPLLGARSVE…GQLRVEFSSL (134 aa). A dehydratase (DH) domain region spans residues 935–1228; sequence HPLLGARSVE…GLTCTSLLRP (294 aa). Positions 935–1231 constitute a PKS/mFAS DH domain; that stretch reads HPLLGARSVE…CTSLLRPGPS (297 aa). The active-site Proton acceptor; for dehydratase activity is histidine 967. Positions 1084 to 1231 are C-terminal hotdog fold; it reads LTSVDMERFY…CTSLLRPGPS (148 aa). Residue aspartate 1141 is the Proton donor; for dehydratase activity of the active site. The C-methyltransferase (CMeT) domain stretch occupies residues 1350-1584; that stretch reads VGENLPAVVR…YMTSVMLSQA (235 aa). Residues 2092-2266 are ketoreductase (KR) domain 1; the sequence is TYLLIGFTGG…AASVMHIGMV (175 aa). A Carrier 1 domain is found at 2372–2449; the sequence is EILAVVEEEF…ELCSTVVSHL (78 aa). The residue at position 2409 (serine 2409) is an O-(pantetheine 4'-phosphoryl)serine. Positions 2482-2511 are disordered; that stretch reads ASPTENEPFTIRNSPNSTQVTSESGVDEET. A compositionally biased stretch (polar residues) spans 2486-2505; the sequence is ENEPFTIRNSPNSTQVTSES. The segment at 2522–2806 is condensation; the sequence is PLSFAQERLW…VNLLPLRLKL (285 aa). An adenylation region spans residues 2973–3385; the sequence is FEKCVVNQPD…RIAGDSQIKL (413 aa). The 78-residue stretch at 3493–3570 folds into the Carrier 2 domain; that stretch reads KPLTETQERL…EMAAKIDGFT (78 aa). Serine 3530 bears the O-(pantetheine 4'-phosphoryl)serine mark. The interval 3612–3833 is thiolester reductase (R) domain; sequence LTGATGFLGV…DFVPVDVVAA (222 aa).

The protein in the C-terminal section; belongs to the NRP synthetase family.

Its pathway is mycotoxin biosynthesis. In terms of biological role, fusarin C synthetase; part of the gene cluster that mediates the biosynthesis of the mycotoxin fusarin C. Within the cluster, FUS1, FUS2, FUS8 and FUS9 are sufficient for fusarin production. The roles of the other FUS members are yet undetermined. The fusarin C synthetase FUS1 is responsible for the condensation of one acetyl-coenzyme A (CoA) unit with six malonyl-CoA units and the amide linkage of the arising heptaketide and homoserine, subsequently releasing the first intermediate, prefusarin, as an alcohol with an open ring structure. The cytochrome P450 monooxygenase FUS8 participates in multiple oxidation processes at carbon C-20 and is able to use the FUS1 product as substrate, resulting in formation of 20-hydroxy-prefusarin. This reaction seems to be essential before the 2-pyrrolidone ring closure can be catalyzed by FUS2, generating 20-hydroxy-fusarin. FUS8 is able to further oxidizes carbon C-20 after ring closure, resulting in the formation of carboxy-fusarin C. As the last step, FUS9 methylates the hydroxyl group at C-21 to generate fusarin C. Fusarin C can then rearrange to epi-fusarin C, the (z)-isomers, and fusarin A and fusarin D. This Gibberella moniliformis (strain M3125 / FGSC 7600) (Maize ear and stalk rot fungus) protein is Fusarin C synthetase.